A 185-amino-acid polypeptide reads, in one-letter code: Elongation factor P (185 aa).

It belongs to the elongation factor P family.

Its subcellular location is the cytoplasm. It participates in protein biosynthesis; polypeptide chain elongation. Its function is as follows. Involved in peptide bond synthesis. Stimulates efficient translation and peptide-bond synthesis on native or reconstituted 70S ribosomes in vitro. Probably functions indirectly by altering the affinity of the ribosome for aminoacyl-tRNA, thus increasing their reactivity as acceptors for peptidyl transferase. This Desulfitobacterium hafniense (strain DSM 10664 / DCB-2) protein is Elongation factor P.